A 50-amino-acid chain; its full sequence is Insulin-1 (50 aa).

3 cysteine pairs are disulfide-bonded: Cys7/Cys36, Cys19/Cys49, and Cys35/Cys40.

Belongs to the insulin family. In terms of assembly, heterodimer of a B chain and an A chain linked by two disulfide bonds.

The protein localises to the secreted. Functionally, insulin decreases blood glucose concentration. It increases cell permeability to monosaccharides, amino acids and fatty acids. It accelerates glycolysis, the pentose phosphate cycle, and glycogen synthesis in liver. In Katsuwonus pelamis (Skipjack tuna), this protein is Insulin-1.